An 893-amino-acid polypeptide reads, in one-letter code: AP-4 complex accessory subunit RUSC1 (893 aa).

Disordered regions lie at residues 31-223 (ELRE…GKAE), 237-332 (EKTE…KDRS), 339-358 (SPDTELPPTGSLGGSLAPPR), and 366-444 (LRSR…RAHA). A compositionally biased stretch (polar residues) spans 77–87 (HGSSIENQQDP). Low complexity-rich tracts occupy residues 95–117 (SPSDPGCSSSLSSCSDLSPDESP) and 149–165 (PSTCSPDSFCCSPDSCS). Positions 177–187 (SNCNALTTCQD) are enriched in polar residues. The span at 237 to 257 (EKTEAGWKTIEDSDSGRKTDE) shows a compositional bias: basic and acidic residues. 2 stretches are compositionally biased toward pro residues: residues 373 to 382 (QPPPVPPRDP) and 390 to 399 (PPRPPPPPVP). The tract at residues 463–598 (MAEAQSGTGQ…FHAFILGLLN (136 aa)) is interaction with TRAF6. The RUN domain occupies 515 to 659 (DVGHLVLTTL…LTFHLDLLFE (145 aa)). The interaction with IKBKG stretch occupies residues 599-665 (TKQLELWFSS…LLFEHHHHLP (67 aa)). 2 disordered regions span residues 700 to 721 (RGTSGESTTDSSTPSARPPAGS) and 751 to 772 (HGTTAEAAQEAPPPTEQTTPGR). Composition is skewed to low complexity over residues 702–714 (TSGESTTDSSTPS) and 754–770 (TAEAAQEAPPPTEQTTP). One can recognise an SH3 domain in the interval 835–893 (QADRAVRALCDHTAAGPDQLSFQRGELLRVIATVDEDWLRCGRDGVEGLVPVGYTSLVL).

Associated component of the adapter-like complex 4 (AP-4). Interacts with IKBKG and TRAF6. Interacts with F-actin, acetylated actin, TUBB3, STX1A, KIF5B and KLC1. In terms of processing, phosphorylated on serine residues following nuclear translocation. Polyubiquitinated; polyubiquitination involves TRAF6. Expressed in brain, brain stem and spinal cord (at protein level).

Its subcellular location is the cytoplasm. It localises to the nucleus. It is found in the cytoskeleton. The protein resides in the cytoplasmic vesicle. The protein localises to the early endosome. Its subcellular location is the postsynaptic density. It localises to the golgi apparatus. Associates with the adapter-like complex 4 (AP-4) and may therefore play a role in vesicular trafficking of proteins at the trans-Golgi network. Signaling adapter which plays a role in neuronal differentiation. Involved in regulation of NGF-dependent neurite outgrowth. May play a role in neuronal vesicular trafficking, specifically involving pre-synaptic membrane proteins. Seems to be involved in signaling pathways that are regulated by the prolonged activation of MAPK. Can regulate the polyubiquitination of IKBKG and thus may be involved in regulation of the NF-kappa-B pathway. This Mus musculus (Mouse) protein is AP-4 complex accessory subunit RUSC1.